The chain runs to 96 residues: Co-chaperonin GroES (96 aa).

The protein belongs to the GroES chaperonin family. In terms of assembly, heptamer of 7 subunits arranged in a ring. Interacts with the chaperonin GroEL.

It localises to the cytoplasm. Together with the chaperonin GroEL, plays an essential role in assisting protein folding. The GroEL-GroES system forms a nano-cage that allows encapsulation of the non-native substrate proteins and provides a physical environment optimized to promote and accelerate protein folding. GroES binds to the apical surface of the GroEL ring, thereby capping the opening of the GroEL channel. In Acinetobacter baylyi (strain ATCC 33305 / BD413 / ADP1), this protein is Co-chaperonin GroES.